The sequence spans 330 residues: tRNA U34 carboxymethyltransferase (330 aa).

Residues Lys-91, Trp-105, Lys-110, Gly-130, 152–154 (DPS), 181–182 (IE), Met-196, Tyr-200, and Arg-315 contribute to the carboxy-S-adenosyl-L-methionine site.

It belongs to the class I-like SAM-binding methyltransferase superfamily. CmoB family. In terms of assembly, homotetramer.

The catalysed reaction is carboxy-S-adenosyl-L-methionine + 5-hydroxyuridine(34) in tRNA = 5-carboxymethoxyuridine(34) in tRNA + S-adenosyl-L-homocysteine + H(+). Functionally, catalyzes carboxymethyl transfer from carboxy-S-adenosyl-L-methionine (Cx-SAM) to 5-hydroxyuridine (ho5U) to form 5-carboxymethoxyuridine (cmo5U) at position 34 in tRNAs. This Shewanella oneidensis (strain ATCC 700550 / JCM 31522 / CIP 106686 / LMG 19005 / NCIMB 14063 / MR-1) protein is tRNA U34 carboxymethyltransferase.